A 311-amino-acid chain; its full sequence is tRNA dimethylallyltransferase (311 aa).

11 to 18 (GPTAVGKT) is an ATP binding site. Substrate is bound at residue 13 to 18 (TAVGKT). The segment at 36–39 (DSMQ) is interaction with substrate tRNA.

Belongs to the IPP transferase family. Monomer. Requires Mg(2+) as cofactor.

It catalyses the reaction adenosine(37) in tRNA + dimethylallyl diphosphate = N(6)-dimethylallyladenosine(37) in tRNA + diphosphate. Catalyzes the transfer of a dimethylallyl group onto the adenine at position 37 in tRNAs that read codons beginning with uridine, leading to the formation of N6-(dimethylallyl)adenosine (i(6)A). The protein is tRNA dimethylallyltransferase of Clostridioides difficile (strain 630) (Peptoclostridium difficile).